Here is a 132-residue protein sequence, read N- to C-terminus: Fluoride-specific ion channel FluC 2 (132 aa).

4 helical membrane-spanning segments follow: residues 8-28 (LQLELLELLLVGAGAVPGALL), 41-61 (LLVNVLGAALLGFLSGLPAAP), 66-86 (LLGIGFCGSVTTFSSWMLAAV), and 96-116 (AALGLIGLTLGLGLGAAALGF). Na(+)-binding residues include glycine 73 and threonine 76.

It belongs to the fluoride channel Fluc/FEX (TC 1.A.43) family.

The protein resides in the cell inner membrane. It catalyses the reaction fluoride(in) = fluoride(out). Its activity is regulated as follows. Na(+) is not transported, but it plays an essential structural role and its presence is essential for fluoride channel function. Functionally, fluoride-specific ion channel. Important for reducing fluoride concentration in the cell, thus reducing its toxicity. The chain is Fluoride-specific ion channel FluC 2 from Synechococcus sp. (strain CC9605).